The chain runs to 62 residues: 2-hydroxymuconate tautomerase (62 aa).

Residue proline 2 is the Proton acceptor; via imino nitrogen of the active site. 9–12 (LEGR) serves as a coordination point for substrate.

It belongs to the 4-oxalocrotonate tautomerase family. Homohexamer.

The catalysed reaction is (2Z,4E)-2-hydroxyhexa-2,4-dienedioate = (3E)-2-oxohex-3-enedioate. Catalyzes both 1,3- and 1,5-keto-enol tautomerization of the diacid 2-hydroxymuconate (2-hydroxy-2,4-hexadienedioate) to produce 2-oxo-4-hexenedioate. This reaction is highly stereoselective and produces a mixture of stereoisomers, where the (3S)-isomer of 2-oxo-4-hexenedioate predominates. Also catalyzes the tautomerization of 2-hydroxymuconate to 2-oxo-3-hexenedioate, however this reaction is slower and occurs after the tautomerization of 2-hydroxymuconate to 2-oxo-4-hexenedioate. Using 2-hydroxy-2,4-pentadienoate, phenylenolpyruvate, (p-hydroxyphenyl)-enolpyruvate and 2-hydroxy-2,4-heptadiene-1,7-dioate, YwhB is a highly efficient 1,3-keto-enol tautomerase, but clearly not a 1,5-keto-enol tautomerase. Tautomerization of the two monoacids 2-hydroxy-2,4-pentadienoate and phenylenolpyruvate produces a mixture of stereoisomers, where the (3R)-isomers predominate. This chain is 2-hydroxymuconate tautomerase (ywhB), found in Bacillus subtilis (strain 168).